A 77-amino-acid polypeptide reads, in one-letter code: Conotoxin Vc6.14 (77 aa).

An N-terminal signal peptide occupies residues 1–19 (MEKLTILLLVAAVLMSTQA). The propeptide occupies 20–37 (MFQGGGEKRPKDKIKFLS). 3 disulfide bridges follow: cysteine 51–cysteine 65, cysteine 58–cysteine 69, and cysteine 64–cysteine 74.

Belongs to the conotoxin O2 superfamily. As to expression, expressed by the venom duct.

The protein localises to the secreted. Functionally, inhibits voltage-gated ion channels. This chain is Conotoxin Vc6.14, found in Conus victoriae (Queen Victoria cone).